Reading from the N-terminus, the 269-residue chain is HTH-type transcriptional activator ArnR (269 aa).

Residues 1–218 are Cytoplasmic-facing; sequence MTKSLFDVLK…LLRLTNSYTL (218 aa). A DNA-binding region (H-T-H motif) is located at residues 39–62; the sequence is TTEISQTINTSRKSIIDAIRKLVD. Residues 219-239 form a helical membrane-spanning segment; sequence EMANVKVMGFILISLPLLMYF. Residues 240-242 lie on the Extracellular side of the membrane; it reads RDQ. A helical transmembrane segment spans residues 243-263; sequence LGLIELPWLYAVIFLALLSVF. The Cytoplasmic portion of the chain corresponds to 264–269; sequence AQILSR.

The protein localises to the cell membrane. Functionally, involved in regulation of archaellar gene expression. Activates flaB transcription upon nutrient starvation by acting on the flaB promoter. The chain is HTH-type transcriptional activator ArnR from Sulfolobus acidocaldarius (strain ATCC 33909 / DSM 639 / JCM 8929 / NBRC 15157 / NCIMB 11770).